The primary structure comprises 152 residues: 3-hydroxyacyl-[acyl-carrier-protein] dehydratase FabZ (152 aa).

Residue His57 is part of the active site.

The protein belongs to the thioester dehydratase family. FabZ subfamily.

It is found in the cytoplasm. The catalysed reaction is a (3R)-hydroxyacyl-[ACP] = a (2E)-enoyl-[ACP] + H2O. Involved in unsaturated fatty acids biosynthesis. Catalyzes the dehydration of short chain beta-hydroxyacyl-ACPs and long chain saturated and unsaturated beta-hydroxyacyl-ACPs. The polypeptide is 3-hydroxyacyl-[acyl-carrier-protein] dehydratase FabZ (Xanthomonas axonopodis pv. citri (strain 306)).